The sequence spans 191 residues: dCTP deaminase, dUMP-forming (191 aa).

DCTP contacts are provided by residues 101–106 (KSSLGR), Asp-119, 127–129 (TLE), Gln-148, Tyr-162, and Gln-174. The active-site Proton donor/acceptor is Glu-129. Positions 169 to 191 (SRYQGQRGPTASRSFQNFHRTQV) are disordered. The segment covering 171 to 191 (YQGQRGPTASRSFQNFHRTQV) has biased composition (polar residues).

It belongs to the dCTP deaminase family. In terms of assembly, homotrimer.

It catalyses the reaction dCTP + 2 H2O = dUMP + NH4(+) + diphosphate. It functions in the pathway pyrimidine metabolism; dUMP biosynthesis; dUMP from dCTP: step 1/1. In terms of biological role, bifunctional enzyme that catalyzes both the deamination of dCTP to dUTP and the hydrolysis of dUTP to dUMP without releasing the toxic dUTP intermediate. The polypeptide is dCTP deaminase, dUMP-forming (Streptomyces griseus subsp. griseus (strain JCM 4626 / CBS 651.72 / NBRC 13350 / KCC S-0626 / ISP 5235)).